The chain runs to 62 residues: Photosystem II reaction center protein Z (62 aa).

2 helical membrane passes run 8–28 and 41–61; these read AVFA…VVFA and FSGT…NSLI.

This sequence belongs to the PsbZ family. In terms of assembly, PSII is composed of 1 copy each of membrane proteins PsbA, PsbB, PsbC, PsbD, PsbE, PsbF, PsbH, PsbI, PsbJ, PsbK, PsbL, PsbM, PsbT, PsbY, PsbZ, Psb30/Ycf12, at least 3 peripheral proteins of the oxygen-evolving complex and a large number of cofactors. It forms dimeric complexes.

Its subcellular location is the plastid. It is found in the chloroplast thylakoid membrane. In terms of biological role, may control the interaction of photosystem II (PSII) cores with the light-harvesting antenna, regulates electron flow through the 2 photosystem reaction centers. PSII is a light-driven water plastoquinone oxidoreductase, using light energy to abstract electrons from H(2)O, generating a proton gradient subsequently used for ATP formation. This Lotus japonicus (Lotus corniculatus var. japonicus) protein is Photosystem II reaction center protein Z.